Consider the following 254-residue polypeptide: Mediator of RNA polymerase II transcription subunit 4 (254 aa).

Residues 72-114 (RVHQEMQSLEKEVEKRDSDIQQLQKQLKEAEHILATAVYQAKE) adopt a coiled-coil conformation. A disordered region spans residues 215–254 (ILPPHHGNDFGLEPPGHNKENEDDVEAMSTDSSSSSSDSD). Residues 243-254 (STDSSSSSSDSD) show a composition bias toward low complexity.

This sequence belongs to the Mediator complex subunit 4 family. Component of the Mediator complex.

It is found in the nucleus. In terms of biological role, component of the Mediator complex, a coactivator involved in the regulated transcription of nearly all RNA polymerase II-dependent genes. Mediator functions as a bridge to convey information from gene-specific regulatory proteins to the basal RNA polymerase II transcription machinery. Mediator is recruited to promoters by direct interactions with regulatory proteins and serves as a scaffold for the assembly of a functional preinitiation complex with RNA polymerase II and the general transcription factors. In Danio rerio (Zebrafish), this protein is Mediator of RNA polymerase II transcription subunit 4 (med4).